The chain runs to 381 residues: cAMP-dependent protein kinase type I-beta regulatory subunit (381 aa).

The tract at residues 1–136 is dimerization and phosphorylation; that stretch reads MASPSCFHSE…ALAKAISKNV (136 aa). The residue at position 3 (Ser3) is a Phosphoserine. The residue at position 21 (Tyr21) is a 3'-nitrotyrosine. The disordered stretch occupies residues 66–88; that stretch reads LARQKSNSQCDSHDEEISPTPPN. Phosphoserine is present on residues Ser77 and Ser83. A Phosphothreonine modification is found at Thr85. The short motif at 96–100 is the Pseudophosphorylation motif element; that stretch reads RRGGV. Residue Arg97 is modified to Omega-N-methylarginine. Residues 137–254, Glu202, Arg211, 255–381, Glu326, and Arg335 contribute to the 3',5'-cyclic AMP site; these read LFSH…SKVS and ILES…SLTV.

The protein belongs to the cAMP-dependent kinase regulatory chain family. As to quaternary structure, the inactive holoenzyme is composed of two regulatory chains and two catalytic chains. Activation by cAMP releases the two active catalytic monomers and the regulatory dimer. Interacts with PRKX; regulates this cAMP-dependent protein kinase. Interacts with smAKAP; this interaction may target PRKAR1B to the plasma membrane. The pseudophosphorylation site binds to the substrate-binding region of the catalytic chain, resulting in the inhibition of its activity. In terms of tissue distribution, abundant in brain and testis. No expression in lung, heart, liver, spleen, kidney and skeletal muscle.

The protein resides in the cell membrane. Regulatory subunit of the cAMP-dependent protein kinases involved in cAMP signaling in cells. The chain is cAMP-dependent protein kinase type I-beta regulatory subunit (Prkar1b) from Rattus norvegicus (Rat).